A 231-amino-acid chain; its full sequence is MLEKVFDINQIFDEKGIMTLKRFGWDGSVAFQNHTDFSDELIDNAKKYGEENGILVYSGLKILSNNQNEIDKIVKKYRNRVEMIFIEGGDIKINRKTLESNETDVLSTPELNRADNGLDHVLTRLGSTNRVSIELNLSNLIKNKNYDRARVLWAFQRNLMLCKKYDTPVVISSGANDIYGIKAPDDVRGFLNTLVDQMYAKKIMETTSKIVNYRLHMKKSNVLMYGLEIVE.

Belongs to the eukaryotic/archaeal RNase P protein component 3 family. Consists of a catalytic RNA component and at least 4-5 protein subunits.

Its subcellular location is the cytoplasm. It carries out the reaction Endonucleolytic cleavage of RNA, removing 5'-extranucleotides from tRNA precursor.. Part of ribonuclease P, a protein complex that generates mature tRNA molecules by cleaving their 5'-ends. This chain is Ribonuclease P protein component 3, found in Methanococcus vannielii (strain ATCC 35089 / DSM 1224 / JCM 13029 / OCM 148 / SB).